The sequence spans 800 residues: MAANLGEPINNEWVQQYNSGVNRESGMELPMQENPEWEKARQALASISKANATSADKGSESGQTNSQFVSQQGEAILQQQQYYQWYSQYNYSYPYNYYYQMNMYNGYNTPGQYGMPGNYQSMSSQSGQHQGNLAQPPVPGLEDSSMSYSNVQSPVSLCNTQTASHQQVNHSMTKPCIQGRNAGNQSNPHSSSNQPNYSQQSFNEGPKQKKGQQLWNRMKHAPGSGGFKFNIQKRPLVMANQNFASSEHHDNSAGQQQQQATHMHHPLQQPQQQPTIEKITEHGNNSSKPEDWPQAMKEYVQRCFTSCESEEDKDRTEKLLKEVLQARLQDGSAYTIDWSREPLPGKDGGKESPKKKRWEQTTLQTSHGSTITITQSPRGGGNSTNAATLRGRGSFIKKFGNRNVFMKESSSSSSAGSRSRSRSPSHSPHRRYRRSDSDSDSAYSGNETRDGGRRNFQKARGRGGHMDRGGRGRLQKGKRSDQAFSKKNRKKNPVAMELEDPEKEFKKEKRAARFQHGHGPKKLRMEPLVLQINNMDPSAADNLDWDEIKIVGNSQDITKHYLRLTCAPDPSTVRPVPVLKKSLTMVKADFKNKQDYVFACEQMKSIRQDLTVQGIRTEFTVEVYETHARIALEKGDHEEFNQCQAQLKSLYAENLAGNVGEFTAYRILYYIFTKNSGDLTTELAHLTKELKADACVAHALSLREAWALSNYHRFFKLYRQAPRMSGYLIDKFAERERKAALKAMIKTFRPLLPVSFVQSELAFANEEECQSFLAPLSLVYAGNDASQIDCKLSLAVLPNI.

Disordered regions lie at residues 118–149 (NYQS…MSYS), 175–229 (PCIQ…GFKF), 245–273 (SSEH…PQQQ), 335–394 (TIDW…GRGS), and 407–519 (KESS…HGHG). Low complexity-rich tracts occupy residues 120 to 131 (QSMSSQSGQHQG) and 184 to 201 (NQSN…SQQS). Polar residues predominate over residues 252–261 (SAGQQQQQAT). A compositionally biased stretch (basic and acidic residues) spans 338 to 352 (WSREPLPGKDGGKES). A compositionally biased stretch (polar residues) spans 360–387 (QTTLQTSHGSTITITQSPRGGGNSTNAA). The span at 409–418 (SSSSSSAGSR) shows a compositional bias: low complexity. 2 stretches are compositionally biased toward basic residues: residues 419-433 (SRSR…RRYR) and 508-519 (EKRAARFQHGHG). In terms of domain architecture, PCI spans 636 to 800 (DHEEFNQCQA…KLSLAVLPNI (165 aa)).

This is Leukocyte receptor cluster member 8 homolog (leng8) from Xenopus laevis (African clawed frog).